Reading from the N-terminus, the 184-residue chain is Putative serine carboxypeptidase-like 52 (184 aa).

The signal sequence occupies residues M1–S22. N93 carries N-linked (GlcNAc...) asparagine glycosylation.

It belongs to the peptidase S10 family.

The protein resides in the secreted. This Arabidopsis thaliana (Mouse-ear cress) protein is Putative serine carboxypeptidase-like 52 (SCPL52).